Reading from the N-terminus, the 227-residue chain is Cytidylate kinase (227 aa).

Position 12 to 20 (12 to 20 (GPSGAGKGT)) interacts with ATP.

The protein belongs to the cytidylate kinase family. Type 1 subfamily.

Its subcellular location is the cytoplasm. The catalysed reaction is CMP + ATP = CDP + ADP. It carries out the reaction dCMP + ATP = dCDP + ADP. This is Cytidylate kinase from Salmonella choleraesuis (strain SC-B67).